Here is a 213-residue protein sequence, read N- to C-terminus: Protein brother (213 aa).

A disordered region spans residues 189–213; the sequence is HTPQTPPEDHHHRGGPGLPRGPMGW. A compositionally biased stretch (gly residues) spans 203 to 213; sequence GPGLPRGPMGW.

Belongs to the CBF-beta family.

It is found in the nucleus. Regulates the DNA-binding properties of Runt. This Drosophila melanogaster (Fruit fly) protein is Protein brother (Bro).